The primary structure comprises 825 residues: Probable ATP-dependent RNA helicase DDX20 (825 aa).

Residues 27-50 (PVQAVEPTPASPWTQRTAHDIGGP) form a disordered region. Residues 63-91 (ADFESLLLSRPVLEGLRAAGFERPSPVQL) carry the Q motif motif. ATP is bound by residues arginine 85, glutamine 90, 107-114 (AKSGTGKT), and 110-115 (GTGKTC). The Helicase ATP-binding domain occupies 94-265 (IPLGRCGLDL…TRYMRDPTFV (172 aa)). Position 188 is a phosphoserine (serine 188). A DEAD box motif is present at residues 212–215 (DEAD). Serine 270 carries the phosphoserine modification. Positions 300–449 (HLQELFSKVP…PIPPGLMEEC (150 aa)) constitute a Helicase C-terminal domain. Composition is skewed to polar residues over residues 465–475 (SPTVATQSPKK) and 484–504 (FQSQ…SASA). Disordered regions lie at residues 465–573 (SPTV…PGSL) and 642–753 (QMLV…EPQE). Residues serine 472, serine 501, and serine 506 each carry the phosphoserine modification. The segment covering 508–518 (RPKHSKPKLPV) has biased composition (basic residues). Polar residues predominate over residues 547–571 (KNSVQTSVEDSSSNSQHQAKDSSPG). Threonine 552 bears the Phosphothreonine mark. Residues serine 561, serine 653, serine 655, serine 657, serine 673, serine 678, and serine 679 each carry the phosphoserine modification. A compositionally biased stretch (low complexity) spans 646 to 668 (SSSQSGDSESDSDSCSSRTSSQS). Threonine 689 and threonine 706 each carry phosphothreonine. Residues 698–711 (EQVQNGNDTPTQVE) are compositionally biased toward polar residues. Positions 733–744 (KQSRRNPARRSS) are enriched in basic residues.

Belongs to the DEAD box helicase family. DDX20 subfamily. As to quaternary structure, part of the core SMN complex that contains SMN1, GEMIN2/SIP1, DDX20/GEMIN3, GEMIN4, GEMIN5, GEMIN6, GEMIN7, GEMIN8 and STRAP/UNRIP. Part of the SMN-Sm complex that contains SMN1, GEMIN2/SIP1, DDX20/GEMIN3, GEMIN4, GEMIN5, GEMIN6, GEMIN7, GEMIN8, STRAP/UNRIP and the Sm proteins SNRPB, SNRPD1, SNRPD2, SNRPD3, SNRPE, SNRPF and SNRPG. Interacts with SMN1; the interaction is direct. Interacts with GEMIN4; the interaction is direct. Interacts with GEMIN5. Interacts with SNUPN; the interaction is direct. Interacts with PPP4R2. Interacts with FOXL2. Interacts with NANOS1 and PUM2.

The protein localises to the cytoplasm. The protein resides in the nucleus. It is found in the gem. It carries out the reaction ATP + H2O = ADP + phosphate + H(+). The enzyme catalyses a ribonucleoside 5'-triphosphate + H2O = a ribonucleoside 5'-diphosphate + phosphate + H(+). Its function is as follows. The SMN complex catalyzes the assembly of small nuclear ribonucleoproteins (snRNPs), the building blocks of the spliceosome, and thereby plays an important role in the splicing of cellular pre-mRNAs. Most spliceosomal snRNPs contain a common set of Sm proteins SNRPB, SNRPD1, SNRPD2, SNRPD3, SNRPE, SNRPF and SNRPG that assemble in a heptameric protein ring on the Sm site of the small nuclear RNA to form the core snRNP (Sm core). In the cytosol, the Sm proteins SNRPD1, SNRPD2, SNRPE, SNRPF and SNRPG are trapped in an inactive 6S pICln-Sm complex by the chaperone CLNS1A that controls the assembly of the core snRNP. To assemble core snRNPs, the SMN complex accepts the trapped 5Sm proteins from CLNS1A forming an intermediate. Binding of snRNA inside 5Sm triggers eviction of the SMN complex, thereby allowing binding of SNRPD3 and SNRPB to complete assembly of the core snRNP. May also play a role in the metabolism of small nucleolar ribonucleoprotein (snoRNPs). The protein is Probable ATP-dependent RNA helicase DDX20 (Ddx20) of Mus musculus (Mouse).